A 307-amino-acid chain; its full sequence is MTAPHPLLTLTDEVADALRDGAPVVALESTIISHGMPYPQNVAMATEVEGIIRAAGAVPATIAVLEGRPRIGLTADDLELLASDEDVAKVSVRDLPFVVARRSHGATTVAATMRLAALAGIRVFVTGGLGGVHRGAQQSFDESADLTELGSTDVAVISAGVKSILDIGLTLERLETLGVPVLAYGSDEFPSFYSRSSGHAAPMRVDSAAEVAAVMAAKWDLGIAGGVVVANPIPEADEIPADEIGGIIEQALADMAARGIHGNEATPYLLGRIVEITGGASLTANIALVRANARLGASIAREYAGLR.

Catalysis depends on Glu-28, which acts as the Proton donor. 2 residues coordinate substrate: Lys-89 and Val-109. Asp-141 serves as a coordination point for Mn(2+). Ser-143–Asp-145 is a binding site for substrate. Lys-162 (nucleophile) is an active-site residue.

This sequence belongs to the pseudouridine-5'-phosphate glycosidase family. As to quaternary structure, homotrimer. Mn(2+) is required as a cofactor.

It carries out the reaction D-ribose 5-phosphate + uracil = psi-UMP + H2O. Functionally, catalyzes the reversible cleavage of pseudouridine 5'-phosphate (PsiMP) to ribose 5-phosphate and uracil. Functions biologically in the cleavage direction, as part of a pseudouridine degradation pathway. In Nocardioides sp. (strain ATCC BAA-499 / JS614), this protein is Pseudouridine-5'-phosphate glycosidase.